The chain runs to 170 residues: MSISLNYSATRDPLSALGLDVGNRRIGVAGSDRLGLLATGLGVIQRRSLSEDIAQVQEWIRRRQATVVVVGIPLLADGSVGSQARKVQRFVRALQVAVDLPIVTVNEYLSTAQAEWDLREAGIPAKAQKGLIDQQSAAVILQTWLDERRASLSEVPAWQSWGNKDYAGEV.

This sequence belongs to the YqgF nuclease family.

Its subcellular location is the cytoplasm. Functionally, could be a nuclease involved in processing of the 5'-end of pre-16S rRNA. The protein is Putative pre-16S rRNA nuclease of Synechococcus sp. (strain JA-2-3B'a(2-13)) (Cyanobacteria bacterium Yellowstone B-Prime).